Consider the following 432-residue polypeptide: Putative D-alanyl-D-alanine carboxypeptidase (432 aa).

Residues 7-25 (ATVLLTFSLSAFAVEYPVL) traverse the membrane as a helical; Signal-anchor segment.

The protein belongs to the peptidase S12 family. YfeW subfamily.

The protein resides in the cell inner membrane. The catalysed reaction is Preferential cleavage: (Ac)2-L-Lys-D-Ala-|-D-Ala. Also transpeptidation of peptidyl-alanyl moieties that are N-acyl substituents of D-alanine.. This Salmonella typhi protein is Putative D-alanyl-D-alanine carboxypeptidase.